A 251-amino-acid chain; its full sequence is Dehydration-responsive element-binding protein 1I (251 aa).

Residues 1–50 form a disordered region; that stretch reads MCTSKLEEITGEWPPPALQAASTTSSSEPCRRLSPPSSKRPAGRTKFHET. A DNA-binding region (AP2/ERF) is located at residues 54–114; sequence VFRGVRRRGR…GRAAACLNFA (61 aa). Positions 169 to 198 are disordered; the sequence is ATSEPSAASDDDAVTSSSSTTDADEEASPF.

It belongs to the AP2/ERF transcription factor family. ERF subfamily.

It is found in the nucleus. Transcriptional activator that binds specifically to the DNA sequence 5'-[AG]CCGAC-3'. Binding to the C-repeat/DRE element mediates high salinity- and dehydration-inducible transcription. In Oryza sativa subsp. japonica (Rice), this protein is Dehydration-responsive element-binding protein 1I (DREB1I).